The sequence spans 241 residues: Ras-like protein 1 (241 aa).

GTP is bound by residues 17–22 (GVGKTA), 33–39 (VETYDPT), 63–64 (AG), 138–141 (NKSD), and 168–170 (SAK). The Effector region motif lies at 36–44 (YDPTIEDSY). A disordered region spans residues 190–241 (RQQASRPSLPGNSRTKTGGMGKSESFYQSDGKRGSRKDGEKHRSKPIKCVIL). A compositionally biased stretch (polar residues) spans 191 to 205 (QQASRPSLPGNSRTK). Residues 219–230 (DGKRGSRKDGEK) are compositionally biased toward basic and acidic residues. Cysteine 238 bears the Cysteine methyl ester mark. The S-farnesyl cysteine moiety is linked to residue cysteine 238. The propeptide at 239-241 (VIL) is removed in mature form.

The protein belongs to the small GTPase superfamily. Ras family. In terms of assembly, interacts with farnesyltransferase beta subunit RAM1.

The protein localises to the cell membrane. Its activity is regulated as follows. Alternates between an inactive form bound to GDP and an active form bound to GTP. Activated by a guanine nucleotide-exchange factor (GEF) and inactivated by a GTPase-activating protein (GAP). Modulates the activity of the adenylate cyclase catalytic subunit and therefore affects the biosynthesis of cyclic-AMP. Plays a role in both surface attachment and surface recognition of appressoria, a highly specialized infection structure for plant penetration. Regulates appressorium formation by coordinated regulation of cAMP signaling and Pmk1 MAPK pathways. This is Ras-like protein 1 from Pyricularia oryzae (strain 70-15 / ATCC MYA-4617 / FGSC 8958) (Rice blast fungus).